A 188-amino-acid chain; its full sequence is dCTP deaminase (188 aa).

Lysine 107–arginine 112 is a binding site for dCTP. The active-site Proton donor/acceptor is the glutamate 133. The dCTP site is built by glutamine 152, tyrosine 166, and glutamine 176.

It belongs to the dCTP deaminase family. In terms of assembly, homotrimer.

The enzyme catalyses dCTP + H2O + H(+) = dUTP + NH4(+). The protein operates within pyrimidine metabolism; dUMP biosynthesis; dUMP from dCTP (dUTP route): step 1/2. Functionally, catalyzes the deamination of dCTP to dUTP. This chain is dCTP deaminase, found in Sulfurovum sp. (strain NBC37-1).